Reading from the N-terminus, the 237-residue chain is Mitochondrial carrier-like protein L276 (237 aa).

3 Solcar repeats span residues 1–83 (MAKY…FENK), 85–161 (YPYT…LNEY), and 164–233 (KPVV…LNKK). 5 helical membrane passes run 11–27 (AIAT…ICTF), 60–76 (VPAI…KYFL), 91–108 (MING…THPI), 140–160 (SFGK…TLNE), and 166–183 (VVSS…MQPL). The Substrate recognition motif lies at 191–196 (IYGLSL). A helical membrane pass occupies residues 205-226 (YYRGLSLNLMRIVPHFVITMTT).

This sequence belongs to the mitochondrial carrier (TC 2.A.29) family.

The protein localises to the host mitochondrion inner membrane. Transports dATP and to a lesser extent dTTP, TTP, UTP and ADP, possibly across the mitochondrial inner membrane. This chain is Mitochondrial carrier-like protein L276, found in Acanthamoeba polyphaga (Amoeba).